We begin with the raw amino-acid sequence, 535 residues long: MELSPRSPPEMLESDCPSPLELKSAPSKKMWIKLRSLLRYMVKQLENGEVNIEELKKNLEYTASLLEAVYIDETRQILDTEDELRELRSDAVPSEVRDWLASTFTQQTRAKGRRAEEKPKFRSIVHAVQAGIFVERMFRRTYTSVGPTYSTAVHNCLKNLDLWCFDVFSLNRAADDHALRTIVFELLTRHSLISRFKIPTVFLMSFLEALETGYGKYKNPYHNQIHAADVTQTVHCFLLRTGMVHCLSEIEVLAIIFAAAIHDYEHTGTTNSFHIQTKSECAILYNDRSVLENHHISSVFRMMQDDEMNIFINLTKDEFAELRALVIEMVLATDMSCHFQQVKTMKTALQQLERIDKSKALSLLLHAADISHPTKQWSVHSRWTKALMEEFFRQGDKEAELGLPFSPLCDRTSTLVAQSQIGFIDFIVEPTFSVLTDVAEKSVQPLADDDSKPKSQPSFQWRQPSLDVDVGDPNPDVVSFRATWTKYIQENKQKWKERAASGITNQMSIDELSPCEEEAPSSPAEDEHNQNGNLD.

A disordered region spans residues 1–21 (MELSPRSPPEMLESDCPSPLE). Residues Ser-7 and Ser-14 each carry the phosphoserine modification. 2 calmodulin-binding regions span residues 27-47 (SKKM…QLEN) and 117-140 (EKPK…MFRR). Residues 145–502 (VGPTYSTAVH…QKWKERAASG (358 aa)) form the PDEase domain. His-222 serves as the catalytic Proton donor. Zn(2+) contacts are provided by His-226, His-262, Asp-263, and Asp-369. A Mg(2+)-binding site is contributed by Asp-263. Disordered regions lie at residues 444-474 (QPLA…GDPN) and 495-535 (WKER…GNLD). Residues 454–463 (KSQPSFQWRQ) show a composition bias toward polar residues. Phosphoserine is present on residues Ser-465 and Ser-513.

It belongs to the cyclic nucleotide phosphodiesterase family. PDE1 subfamily. In terms of assembly, homodimer. Zn(2+) is required as a cofactor. Requires Mg(2+) as cofactor.

The protein localises to the cytoplasm. The protein resides in the cytosol. It carries out the reaction a nucleoside 3',5'-cyclic phosphate + H2O = a nucleoside 5'-phosphate + H(+). The catalysed reaction is 3',5'-cyclic GMP + H2O = GMP + H(+). It catalyses the reaction 3',5'-cyclic AMP + H2O = AMP + H(+). Its activity is regulated as follows. Type I PDE are activated by the binding of calmodulin in the presence of Ca(2+). In terms of biological role, cyclic nucleotide phosphodiesterase with a dual specificity for the second messengers cAMP and cGMP, which are key regulators of many important physiological processes. Has a preference for cGMP as a substrate. The polypeptide is Dual specificity calcium/calmodulin-dependent 3',5'-cyclic nucleotide phosphodiesterase 1B (Mus musculus (Mouse)).